A 371-amino-acid chain; its full sequence is MALETFVNSEPFTFGVELEIQVVNTHNYDLTKAASDLMRLIQGETFPGNITPEITESMIELSTGICHTHEQALGELHAIRDVLVKAADQLNVGLAGGGTHAFQQWSDRQIYDAPRFQYLSELYGYLAKQFTVFGQHVHIGCPDPDSALFLLHSMSRFIPHFIALSASSPFVQNVDTGFHSARLNSVFAFPLSGRAPFALTWHDFEEYFTKMVNTGVVNSMKDFYWDIRPKPGYGTIEVRVMDTPLSVDRAAAIACYIQTLARYLLIDRPLTLTEDDYLVYTFNRFEACRFGLEGTCVNPQTGERRTIAEDILDTLDRIAPHAAELGSRAALDEIGALAKARVNDASWLRTVFKQEKSLNETVRQQCLRWRE.

This sequence belongs to the glutamate--cysteine ligase type 2 family. YbdK subfamily.

The enzyme catalyses L-cysteine + L-glutamate + ATP = gamma-L-glutamyl-L-cysteine + ADP + phosphate + H(+). ATP-dependent carboxylate-amine ligase which exhibits weak glutamate--cysteine ligase activity. The chain is Putative glutamate--cysteine ligase 2 from Burkholderia multivorans (strain ATCC 17616 / 249).